The sequence spans 283 residues: Pantothenate synthetase (283 aa).

26 to 33 (MGNLHEGH) contacts ATP. Catalysis depends on His-33, which acts as the Proton donor. Residue Gln-57 participates in (R)-pantoate binding. Gln-57 is a binding site for beta-alanine. 144 to 147 (GKKD) provides a ligand contact to ATP. Gln-150 is a (R)-pantoate binding site. ATP is bound by residues Val-173 and 181-184 (LSSR).

Belongs to the pantothenate synthetase family. As to quaternary structure, homodimer.

The protein localises to the cytoplasm. It carries out the reaction (R)-pantoate + beta-alanine + ATP = (R)-pantothenate + AMP + diphosphate + H(+). The protein operates within cofactor biosynthesis; (R)-pantothenate biosynthesis; (R)-pantothenate from (R)-pantoate and beta-alanine: step 1/1. In terms of biological role, catalyzes the condensation of pantoate with beta-alanine in an ATP-dependent reaction via a pantoyl-adenylate intermediate. The sequence is that of Pantothenate synthetase from Ralstonia nicotianae (strain ATCC BAA-1114 / GMI1000) (Ralstonia solanacearum).